Here is a 512-residue protein sequence, read N- to C-terminus: 2,3-bisphosphoglycerate-independent phosphoglycerate mutase (512 aa).

Residues Asp12 and Ser62 each contribute to the Mn(2+) site. Ser62 serves as the catalytic Phosphoserine intermediate. Residues His123, 154 to 155 (RD), Arg181, Arg187, 253 to 256 (RPDR), and Lys336 contribute to the substrate site. Asp403, His407, Asp444, His445, and His462 together coordinate Mn(2+).

Belongs to the BPG-independent phosphoglycerate mutase family. Monomer. The cofactor is Mn(2+).

It carries out the reaction (2R)-2-phosphoglycerate = (2R)-3-phosphoglycerate. Its pathway is carbohydrate degradation; glycolysis; pyruvate from D-glyceraldehyde 3-phosphate: step 3/5. In terms of biological role, catalyzes the interconversion of 2-phosphoglycerate and 3-phosphoglycerate. The polypeptide is 2,3-bisphosphoglycerate-independent phosphoglycerate mutase (Onion yellows phytoplasma (strain OY-M)).